The following is a 97-amino-acid chain: Small ribosomal subunit protein bS21 (97 aa).

Residues 37-97 (EKPSVRKARE…APASSPTTTA (61 aa)) form a disordered region. Positions 76-97 (RAVAPRRPAAAPAPASSPTTTA) are enriched in low complexity.

The protein belongs to the bacterial ribosomal protein bS21 family.

This chain is Small ribosomal subunit protein bS21, found in Methylobacterium sp. (strain 4-46).